Here is a 292-residue protein sequence, read N- to C-terminus: Diaminopimelate epimerase (292 aa).

Residues N14 and N78 each coordinate substrate. C87 functions as the Proton donor in the catalytic mechanism. Substrate contacts are provided by residues 88–89, N164, N197, and 221–222; these read GN and ER. The Proton acceptor role is filled by C230. 231-232 is a binding site for substrate; that stretch reads GT.

Belongs to the diaminopimelate epimerase family. In terms of assembly, homodimer.

It is found in the cytoplasm. It catalyses the reaction (2S,6S)-2,6-diaminopimelate = meso-2,6-diaminopimelate. It participates in amino-acid biosynthesis; L-lysine biosynthesis via DAP pathway; DL-2,6-diaminopimelate from LL-2,6-diaminopimelate: step 1/1. Its function is as follows. Catalyzes the stereoinversion of LL-2,6-diaminopimelate (L,L-DAP) to meso-diaminopimelate (meso-DAP), a precursor of L-lysine and an essential component of the bacterial peptidoglycan. The chain is Diaminopimelate epimerase from Leifsonia xyli subsp. xyli (strain CTCB07).